The sequence spans 330 residues: MTHILLLCGGGGTEHEVSLVSSKYIAQQLSELDAFDITHLEIKDEGWFHIESGLKYELRSDKTLLSGETVSSPVDYVVPCIHGYPGETGDIQSMLDMLSIPYLGCDAESSTNSFNKITSKLWYDALGIPNTPYLFLTENNEETHQSALAAFKQWGGLFVKAACQGSSVGCYKVTSEEELAQAINGAFGYSQQVLVEKAVKPRELEVAAYEIDGQLFTTAPGEVTAPDGAFYTYDEKYGSGSHSTTSLDAQNLTEEQVKLIDQYSRKVFTQMKLKDLSRIDFFLTDDNEIYLNEVNTFPGMTPISMFPKLLEHNGDCFKTFLQKAVLNAIK.

In terms of domain architecture, ATP-grasp spans 120–326 (KLWYDALGIP…FKTFLQKAVL (207 aa)). 150-205 (AFKQWGGLFVKAACQGSSVGCYKVTSEEELAQAINGAFGYSQQVLVEKAVKPRELE) contacts ATP. Residues D280, E293, and N295 each coordinate Mg(2+).

It belongs to the D-alanine--D-alanine ligase family. The cofactor is Mg(2+). Mn(2+) is required as a cofactor.

The protein resides in the cytoplasm. The enzyme catalyses 2 D-alanine + ATP = D-alanyl-D-alanine + ADP + phosphate + H(+). It functions in the pathway cell wall biogenesis; peptidoglycan biosynthesis. Cell wall formation. The chain is D-alanine--D-alanine ligase from Aliivibrio fischeri (strain MJ11) (Vibrio fischeri).